The chain runs to 428 residues: Pyruvate dehydrogenase E1 component subunit alpha-3, chloroplastic (428 aa).

The transit peptide at 1–61 directs the protein to the chloroplast; sequence MATAFAPTKL…NATRRSPVVS (61 aa). Positions 115, 141, 142, 190, 192, 227, 228, and 256 each coordinate pyruvate. Residues Y141, R142, A190, I192, D227, G228, N256, and H325 each coordinate thiamine diphosphate. Mg(2+) is bound at residue D227. N256 contributes to the Mg(2+) binding site.

Tetramer of 2 alpha and 2 beta subunits. Thiamine diphosphate is required as a cofactor. It depends on Mg(2+) as a cofactor.

It localises to the plastid. The protein resides in the chloroplast. The catalysed reaction is N(6)-[(R)-lipoyl]-L-lysyl-[protein] + pyruvate + H(+) = N(6)-[(R)-S(8)-acetyldihydrolipoyl]-L-lysyl-[protein] + CO2. Functionally, the pyruvate dehydrogenase complex catalyzes the overall conversion of pyruvate to acetyl-CoA and CO(2). It contains multiple copies of three enzymatic components: pyruvate dehydrogenase (E1), dihydrolipoamide acetyltransferase (E2) and lipoamide dehydrogenase (E3). The sequence is that of Pyruvate dehydrogenase E1 component subunit alpha-3, chloroplastic (PDH-E1 ALPHA) from Arabidopsis thaliana (Mouse-ear cress).